The primary structure comprises 291 residues: Shikimate dehydrogenase (NADP(+)) (291 aa).

Residues 22–24 (SLS) and T69 contribute to the shikimate site. K73 acts as the Proton acceptor in catalysis. Residues N94 and D110 each contribute to the shikimate site. Residues 131 to 135 (GSGGA) and L226 contribute to the NADP(+) site. A shikimate-binding site is contributed by Y228. G249 contacts NADP(+).

The protein belongs to the shikimate dehydrogenase family. Homodimer.

The catalysed reaction is shikimate + NADP(+) = 3-dehydroshikimate + NADPH + H(+). The protein operates within metabolic intermediate biosynthesis; chorismate biosynthesis; chorismate from D-erythrose 4-phosphate and phosphoenolpyruvate: step 4/7. Its function is as follows. Involved in the biosynthesis of the chorismate, which leads to the biosynthesis of aromatic amino acids. Catalyzes the reversible NADPH linked reduction of 3-dehydroshikimate (DHSA) to yield shikimate (SA). This Synechococcus sp. (strain JA-3-3Ab) (Cyanobacteria bacterium Yellowstone A-Prime) protein is Shikimate dehydrogenase (NADP(+)).